We begin with the raw amino-acid sequence, 307 residues long: Glutathione synthetase (307 aa).

An ATP-grasp domain is found at 120–304 (KLGALRYSHL…VSDKVIEKLL (185 aa)). 146–202 (AQINHDVVVKPLGGKGGQGVIRLTKDSPGIKAMIELITSQEQLPVMMQKFIPEVKEG) contributes to the ATP binding site. The Mg(2+) site is built by Glu-275 and Asn-277.

The protein belongs to the prokaryotic GSH synthase family. Mg(2+) serves as cofactor. Requires Mn(2+) as cofactor.

The enzyme catalyses gamma-L-glutamyl-L-cysteine + glycine + ATP = glutathione + ADP + phosphate + H(+). It participates in sulfur metabolism; glutathione biosynthesis; glutathione from L-cysteine and L-glutamate: step 2/2. This is Glutathione synthetase from Prochlorococcus marinus subsp. pastoris (strain CCMP1986 / NIES-2087 / MED4).